Consider the following 557-residue polypeptide: Probable protein kinase UbiB (557 aa).

Residues 121-509 enclose the Protein kinase domain; that stretch reads AFDTTPLASA…RKLQTRVVTA (389 aa). ATP is bound by residues 127–135 and K154; that span reads LASASIAQV. D289 acts as the Proton acceptor in catalysis. A run of 2 helical transmembrane segments spans residues 506-526 and 535-555; these read VVTA…YGLH and VPVW…IAWL.

The protein belongs to the ABC1 family. UbiB subfamily.

It is found in the cell inner membrane. Its pathway is cofactor biosynthesis; ubiquinone biosynthesis [regulation]. In terms of biological role, is probably a protein kinase regulator of UbiI activity which is involved in aerobic coenzyme Q (ubiquinone) biosynthesis. This Xanthomonas campestris pv. campestris (strain 8004) protein is Probable protein kinase UbiB.